Consider the following 21-residue polypeptide: Cupiennin-6c (21 aa).

Ser-21 bears the Serine amide mark.

As to expression, expressed by the venom gland.

The protein resides in the secreted. The sequence is that of Cupiennin-6c from Cupiennius salei (American wandering spider).